The chain runs to 1709 residues: Protein SHORTAGE IN CHIASMATA 1 homolog (1709 aa).

Composition is skewed to basic and acidic residues over residues 532-542, 552-568, and 1601-1613; these read PKLQDEDKHSD, DPQKLEATQKCEQEGGT, and ESFRYRGDRDTPS. Disordered regions lie at residues 532-586 and 1566-1662; these read PKLQ…SSFP and KRKA…DPTW.

This sequence belongs to the XPF family. In terms of assembly, interacts (via C-terminus) with PTD. Interacts with ZIP4. As to expression, highly expressed in anthers and pistil during meiosis. Expressed in pollen mother cells (PMCs) during meiosis. Expressed at low levels in roots, shoots, leaves, flowers, and glumes.

Its subcellular location is the chromosome. The protein localises to the nucleus. It is found in the cytoplasm. The protein resides in the cell membrane. Essential for normal crossover (CO) formation during meiosis. Essential component for the formation of class I meiotic COs. Interacts with PTD, another meiotic component, to regulate CO formation, possibly by stabilizing the recombination intermediates during meiosis. SHOC1 and PTD may form transient heterotrimeric or heterotetrameric complexes with HEI10 and/or ZIP4 to promote class I COs formation. Does not seem to be involved in early meiotic recombination steps involving double-strand break (DSB) formation, processing, and single-strand invasion. Does not seem to be involved in homologous pairing or synaptonemal complex (SC) assembly. The polypeptide is Protein SHORTAGE IN CHIASMATA 1 homolog (Oryza sativa subsp. japonica (Rice)).